A 459-amino-acid polypeptide reads, in one-letter code: Ribulose bisphosphate carboxylase large chain (459 aa).

K4 bears the N6,N6,N6-trimethyllysine mark. 2 residues coordinate substrate: N113 and T163. K165 serves as the catalytic Proton acceptor. Substrate is bound at residue K167. The Mg(2+) site is built by K191, D193, and E194. N6-carboxylysine is present on K191. H284 acts as the Proton acceptor in catalysis. Residues R285, H317, and S369 each contribute to the substrate site.

Belongs to the RuBisCO large chain family. Type I subfamily. In terms of assembly, heterohexadecamer of 8 large chains and 8 small chains; disulfide-linked. The disulfide link is formed within the large subunit homodimers. The cofactor is Mg(2+). The disulfide bond which can form in the large chain dimeric partners within the hexadecamer appears to be associated with oxidative stress and protein turnover.

It localises to the plastid. The protein resides in the chloroplast. It catalyses the reaction 2 (2R)-3-phosphoglycerate + 2 H(+) = D-ribulose 1,5-bisphosphate + CO2 + H2O. It carries out the reaction D-ribulose 1,5-bisphosphate + O2 = 2-phosphoglycolate + (2R)-3-phosphoglycerate + 2 H(+). RuBisCO catalyzes two reactions: the carboxylation of D-ribulose 1,5-bisphosphate, the primary event in carbon dioxide fixation, as well as the oxidative fragmentation of the pentose substrate in the photorespiration process. Both reactions occur simultaneously and in competition at the same active site. The protein is Ribulose bisphosphate carboxylase large chain of Nypa fruticans (Nypa palm).